Here is a 68-residue protein sequence, read N- to C-terminus: uncharacterized protein (68 aa).

This is an uncharacterized protein from Escherichia coli (Bacteriophage T4).